Consider the following 227-residue polypeptide: Urease accessory protein UreF (227 aa).

This sequence belongs to the UreF family. In terms of assembly, ureD, UreF and UreG form a complex that acts as a GTP-hydrolysis-dependent molecular chaperone, activating the urease apoprotein by helping to assemble the nickel containing metallocenter of UreC. The UreE protein probably delivers the nickel.

Its subcellular location is the cytoplasm. Functionally, required for maturation of urease via the functional incorporation of the urease nickel metallocenter. This Actinobacillus pleuropneumoniae serotype 3 (strain JL03) protein is Urease accessory protein UreF.